The following is a 300-amino-acid chain: Protoheme IX farnesyltransferase (300 aa).

8 helical membrane-spanning segments follow: residues 24–44 (VTQLAVFCAVIGMFLATPGMV), 46–66 (WHVLIGGTIGIWLLAGAAFAI), 94–114 (PQILLFSAVLGSVGAWTLYTF), 118–138 (LTMWLTIATFVGYAVVYTLLL), 146–166 (IVIGGASGAMPPALGWAAVTG), 172–192 (AWILVLIIFVWTPPHFWVLAL), 224–244 (VILFAVTLMPFISGMSGVVYL), and 278–298 (IVYLSLLFAALLVDHYARPLL).

This sequence belongs to the UbiA prenyltransferase family. Protoheme IX farnesyltransferase subfamily.

It localises to the cell inner membrane. It catalyses the reaction heme b + (2E,6E)-farnesyl diphosphate + H2O = Fe(II)-heme o + diphosphate. The protein operates within porphyrin-containing compound metabolism; heme O biosynthesis; heme O from protoheme: step 1/1. Functionally, converts heme B (protoheme IX) to heme O by substitution of the vinyl group on carbon 2 of heme B porphyrin ring with a hydroxyethyl farnesyl side group. This chain is Protoheme IX farnesyltransferase, found in Burkholderia ambifaria (strain ATCC BAA-244 / DSM 16087 / CCUG 44356 / LMG 19182 / AMMD) (Burkholderia cepacia (strain AMMD)).